The primary structure comprises 391 residues: Zinc finger protein ubi-d4 (391 aa).

Residue Ala2 is modified to N-acetylalanine. Glycyl lysine isopeptide (Lys-Gly) (interchain with G-Cter in SUMO2) cross-links involve residues Lys10, Lys99, Lys107, and Lys108. Disordered stretches follow at residues 79-146 and 165-196; these read WRKK…LGEF and DDLD…ARKK. 2 stretches are compositionally biased toward basic and acidic residues: residues 100-110 and 126-140; these read PDTDQTLKKEG and DPLE…RVDD. Phosphoserine is present on Ser142. Acidic residues predominate over residues 165 to 174; it reads DDLDDEDYEE. Tyr172 bears the Phosphotyrosine mark. Thr176 carries the phosphothreonine modification. Glycyl lysine isopeptide (Lys-Gly) (interchain with G-Cter in SUMO2) cross-links involve residues Lys178 and Lys196. Phosphoserine is present on Ser200. The segment at 209-232 adopts a C2H2-type zinc-finger fold; the sequence is YACDICGKRYKNRPGLSYHYAHSH. The tract at residues 233–266 is disordered; it reads LAEEEGEDKEDSQPPTPVSQRSEEQKSKKGPDGL. Ser244 carries the phosphoserine modification. Positions 253–263 are enriched in basic and acidic residues; the sequence is RSEEQKSKKGP. 2 PHD-type zinc fingers span residues 270 to 330 and 327 to 377; these read NNYC…CKCC and CKCC…CLDL. Residue Ser280 is modified to Phosphoserine. Residue Lys281 forms a Glycyl lysine isopeptide (Lys-Gly) (interchain with G-Cter in SUMO2) linkage.

Belongs to the requiem/DPF family. As to quaternary structure, interacts with the nucleosomes, in particular nucleosomes bearing histone H3 crotonylated at 'Lys-14' (H3K14cr) for which DPF2 has high affinity. Also interacts (via PHD-type zinc finger domains) with histone H3 butyrylated at 'Lys-14' (H3K14bu), histone H3 propionylated at 'Lys-14' (H3K14pr), and histone H3 acetylated at 'Lys-14' (H3K14ac). Interacts with histone H3 acetylated at 'Lys-9' (H3K9ac), histone H3 di-methylated at 'Lys-9' (H3K9me2), and histone H3 tri-methylated at 'Lys-9' (H3K9me3). Interacts with histone H4 acetylated at 'Lys-12' (H4K12ac). Interacts with histone H4 acetylated at 'Lys-16' (H4K16ac). Interacts with SWI/SNF complex components. Interacts with SMARCA2, SMARCA4, SMARCB1 and SMARCD1. Interacts with SMARCC1, SMARCC2 and ACTL6A. Interacts with RUNX1. In terms of tissue distribution, ubiquitous.

Its subcellular location is the nucleus. The protein resides in the cytoplasm. Functionally, plays an active role in transcriptional regulation by binding modified histones H3 and H4. Is a negative regulator of myeloid differentiation of hematopoietic progenitor cells. Might also have a role in the development and maturation of lymphoid cells. Involved in the regulation of non-canonical NF-kappa-B pathway. This chain is Zinc finger protein ubi-d4 (DPF2), found in Homo sapiens (Human).